The primary structure comprises 347 residues: MRFSTLLKDLQTGEAELRWSQCGADPILAGAASLEQAKGDQLSFLEKGNALIAALTETGAGALLLPDQPDLIQCASERGIAFAVLANPRLAFAEALERLHPRLRPLAEIHPSAVVDERAVVGPGTFIAPRVCIGASSRIGANCIVHPGVVIYDDVEVGEGCELHANAVLHPGSRLGRGCVVNSNAVIGSEGFGFVPTPRGWRKMPQTGQVVLEDGVEVGCGSTIDRPSVGETRIGAGSKIDNLVQIGHGVTTGRGCALASQVGIAGGAKLGHGVILAGQVGVANRAVVGDGAIASSKSGIHGEVAPGEVVSGYPAIPNRLWLRCSAAFSKLPEMAKTLRELKRDISQ.

His-248 functions as the Proton acceptor in the catalytic mechanism.

The protein belongs to the transferase hexapeptide repeat family. LpxD subfamily. In terms of assembly, homotrimer.

It carries out the reaction a UDP-3-O-[(3R)-3-hydroxyacyl]-alpha-D-glucosamine + a (3R)-hydroxyacyl-[ACP] = a UDP-2-N,3-O-bis[(3R)-3-hydroxyacyl]-alpha-D-glucosamine + holo-[ACP] + H(+). It functions in the pathway bacterial outer membrane biogenesis; LPS lipid A biosynthesis. Functionally, catalyzes the N-acylation of UDP-3-O-acylglucosamine using 3-hydroxyacyl-ACP as the acyl donor. Is involved in the biosynthesis of lipid A, a phosphorylated glycolipid that anchors the lipopolysaccharide to the outer membrane of the cell. The protein is UDP-3-O-acylglucosamine N-acyltransferase of Synechococcus sp. (strain CC9902).